The sequence spans 139 residues: U6 snRNA-associated Sm-like protein LSm4 (139 aa).

An N-acetylmethionine modification is found at M1. A Sm domain is found at L2–I75. K80 is covalently cross-linked (Glycyl lysine isopeptide (Lys-Gly) (interchain with G-Cter in SUMO2)). The disordered stretch occupies residues G87–Q139. Positions R102–R125 are enriched in gly residues.

Belongs to the snRNP Sm proteins family. In terms of assembly, component of the precatalytic spliceosome (spliceosome B complex). Component of the U4/U6-U5 tri-snRNP complex, a building block of the precatalytic spliceosome (spliceosome B complex). The U4/U6-U5 tri-snRNP complex is composed of the U4, U6 and U5 snRNAs and at least PRPF3, PRPF4, PRPF6, PRPF8, PRPF31, SNRNP200, TXNL4A, SNRNP40, SNRPB, SNRPD1, SNRPD2, SNRPD3, SNRPE, SNRPF, SNRPG, DDX23, CD2BP2, PPIH, SNU13, EFTUD2, SART1 and USP39, plus LSM2, LSM3, LSM4, LSM5, LSM6, LSM7 and LSM8. LSM2, LSM3, LSM4, LSM5, LSM6, LSM7 and LSM8 form a heptameric, ring-shaped subcomplex (the LSM2-8 complex) that is part of the U4/U6-U5 tri-snRNP complex and the precatalytic spliceosome.

It is found in the nucleus. Plays a role in pre-mRNA splicing as component of the U4/U6-U5 tri-snRNP complex that is involved in spliceosome assembly, and as component of the precatalytic spliceosome (spliceosome B complex). The heptameric LSM2-8 complex binds specifically to the 3'-terminal U-tract of U6 snRNA. The chain is U6 snRNA-associated Sm-like protein LSm4 (LSM4) from Bos taurus (Bovine).